Here is a 362-residue protein sequence, read N- to C-terminus: UDP-arabinopyranose mutase 3 (362 aa).

The DXD motif motif lies at 106–108 (DDD). Residue R154 is glycosylated (N-linked (Glc...) arginine).

It belongs to the RGP family. As to quaternary structure, heterodimer with RGP1. The cofactor is Mn(2+). Mg(2+) serves as cofactor. In terms of processing, reversibly glycosylated in vitro by UDP-glucose, UDP-xylose and UDP-galactose, but not UDP-mannose. As to expression, specifically expressed in developing seeds.

Its subcellular location is the cytoplasm. It is found in the cytosol. The protein resides in the golgi apparatus. It catalyses the reaction UDP-beta-L-arabinofuranose = UDP-beta-L-arabinopyranose. In terms of biological role, UDP-L-arabinose mutase involved in the biosynthesis of cell wall non-cellulosic polysaccharides. Catalyzes the interconvertion of UDP-L-arabinopyranose (UDP-Arap) and UDP-L-arabinofuranose (UDP-Araf). Preferentially catalyzes the formation of UDP-Arap from UDP-Araf. At thermodynamic equilibrium in vitro the ratio of the pyranose form over the furanose form is 95:5. Is not active on other UDP-sugars (UDP-Gal, UDP-Xyl, UDP-Glc, GDP-Man and GDP-Fuc). Is probably active as heteromer in vivo. This Arabidopsis thaliana (Mouse-ear cress) protein is UDP-arabinopyranose mutase 3.